We begin with the raw amino-acid sequence, 721 residues long: Polyribonucleotide nucleotidyltransferase (721 aa).

Residues Asp-495 and Asp-501 each contribute to the Mg(2+) site. The KH domain occupies 562–621; sequence PRLLSFRIDPELIGTVIGPGGRTIKGITERTNTKIDIEDGGIVTIASHDGAAAEEAQKII. The 69-residue stretch at 631-699 folds into the S1 motif domain; that stretch reads GEIFSGVVTR…SRGRINLTLR (69 aa). A disordered region spans residues 701–721; that stretch reads VGQNNGMSYPEPTPTPVAPLN. Pro residues predominate over residues 711–721; the sequence is EPTPTPVAPLN.

Belongs to the polyribonucleotide nucleotidyltransferase family. Mg(2+) is required as a cofactor.

The protein resides in the cytoplasm. It carries out the reaction RNA(n+1) + phosphate = RNA(n) + a ribonucleoside 5'-diphosphate. Functionally, involved in mRNA degradation. Catalyzes the phosphorolysis of single-stranded polyribonucleotides processively in the 3'- to 5'-direction. The protein is Polyribonucleotide nucleotidyltransferase of Prochlorococcus marinus (strain MIT 9215).